A 145-amino-acid chain; its full sequence is D-aminoacyl-tRNA deacylase (145 aa).

Residues 137-138 (GP) carry the Gly-cisPro motif, important for rejection of L-amino acids motif.

It belongs to the DTD family. In terms of assembly, homodimer.

The protein resides in the cytoplasm. The catalysed reaction is glycyl-tRNA(Ala) + H2O = tRNA(Ala) + glycine + H(+). It catalyses the reaction a D-aminoacyl-tRNA + H2O = a tRNA + a D-alpha-amino acid + H(+). An aminoacyl-tRNA editing enzyme that deacylates mischarged D-aminoacyl-tRNAs. Also deacylates mischarged glycyl-tRNA(Ala), protecting cells against glycine mischarging by AlaRS. Acts via tRNA-based rather than protein-based catalysis; rejects L-amino acids rather than detecting D-amino acids in the active site. By recycling D-aminoacyl-tRNA to D-amino acids and free tRNA molecules, this enzyme counteracts the toxicity associated with the formation of D-aminoacyl-tRNA entities in vivo and helps enforce protein L-homochirality. This is D-aminoacyl-tRNA deacylase from Shewanella baltica (strain OS195).